We begin with the raw amino-acid sequence, 202 residues long: Putative scarecrow-like protein 16 (202 aa).

Positions 1–26 (MQIPTLIDSMANKLHKKPPPLLKLTV) are VHIID. The GRAS domain occupies 1-202 (MQIPTLIDSM…RVERLEPKSR (202 aa)). The interval 45 to 82 (ELGSKLVNFATTRNVAMEFRIISSSYSDGLSSLIEQLR) is leucine repeat II (LRII). Residues 92-184 (LVVNCHMMLH…EADISWKIDN (93 aa)) form a PFYRE region. Positions 187 to 202 (AKEGAERVERLEPKSR) are SAW.

The protein belongs to the GRAS family. As to expression, expressed in seedlings, leaves and flowers.

The protein localises to the nucleus. Its function is as follows. Probable transcription factor involved in plant development. The chain is Putative scarecrow-like protein 16 (SCL16) from Arabidopsis thaliana (Mouse-ear cress).